A 378-amino-acid chain; its full sequence is Chaperone protein DnaJ (378 aa).

The region spanning 5-70 (DYYEVLSVSR…DKKAAYDQFG (66 aa)) is the J domain. The CR-type zinc finger occupies 133–211 (GLTKELRIPT…CHGEGRVEKS (79 aa)). Positions 146, 149, 163, 166, 185, 188, 199, and 202 each coordinate Zn(2+). CXXCXGXG motif repeat units follow at residues 146-153 (CDSCDGSG), 163-170 (CGTCHGQG), 185-192 (CPTCHGRG), and 199-206 (CNKCHGEG).

The protein belongs to the DnaJ family. In terms of assembly, homodimer. Zn(2+) serves as cofactor.

The protein localises to the cytoplasm. Its function is as follows. Participates actively in the response to hyperosmotic and heat shock by preventing the aggregation of stress-denatured proteins and by disaggregating proteins, also in an autonomous, DnaK-independent fashion. Unfolded proteins bind initially to DnaJ; upon interaction with the DnaJ-bound protein, DnaK hydrolyzes its bound ATP, resulting in the formation of a stable complex. GrpE releases ADP from DnaK; ATP binding to DnaK triggers the release of the substrate protein, thus completing the reaction cycle. Several rounds of ATP-dependent interactions between DnaJ, DnaK and GrpE are required for fully efficient folding. Also involved, together with DnaK and GrpE, in the DNA replication of plasmids through activation of initiation proteins. This is Chaperone protein DnaJ from Shewanella sediminis (strain HAW-EB3).